Here is a 632-residue protein sequence, read N- to C-terminus: uncharacterized protein (632 aa).

It belongs to the MG032/MG096/MG288 family.

This is an uncharacterized protein from Mycoplasma pneumoniae (strain ATCC 29342 / M129 / Subtype 1) (Mycoplasmoides pneumoniae).